The primary structure comprises 186 residues: MRLLIMGPQGVGKGTQAALLAEHFNIPTISTGDIFRYNIKNKTELGLEAMSYTDKGELVPDSLTNKIVKDRLAKEDCKNGWILDGYPRNAAQVTALDEMLADLDTPLDHVVALEAARDVLLERMKKRAAEQGRADDTPEAIAKRLETYEKETAPLLDIYEARGLLVVVNGVGDIDEISGRIISHLE.

10-15 (GVGKGT) is a binding site for ATP. The segment at 30–59 (STGDIFRYNIKNKTELGLEAMSYTDKGELV) is NMP. AMP is bound by residues Thr-31, Arg-36, 57-59 (ELV), 85-88 (GYPR), and Gln-92. Residues 126 to 136 (KRAAEQGRADD) are LID. Arg-127 is a binding site for ATP. 2 residues coordinate AMP: Arg-133 and Arg-144. ATP is bound at residue Gly-172.

This sequence belongs to the adenylate kinase family. Monomer.

The protein resides in the cytoplasm. It carries out the reaction AMP + ATP = 2 ADP. It participates in purine metabolism; AMP biosynthesis via salvage pathway; AMP from ADP: step 1/1. In terms of biological role, catalyzes the reversible transfer of the terminal phosphate group between ATP and AMP. Plays an important role in cellular energy homeostasis and in adenine nucleotide metabolism. This Bifidobacterium longum (strain NCC 2705) protein is Adenylate kinase.